The sequence spans 320 residues: MGLPWGQPHLGLQMLLLALNCLRPSLSLGEWGSWMDASSQTQGAGGPAGVIGPWAPAPLRLGEAAPGTPTPVSVAHLLSPVATELVPYTPQITAWDLEGKVTATTFSLEQPRCVFDGLASASDTVWLVVAFSNASRGFQNPETLADIPASPQLLTDGHYMTLPLSPDQLPCGDPMAGSGGAPVLRVGHDHGCHQQPFCNAPLPGPGPYREDPRIHRHLARAAKWQHDRHYLHPLFSGRPPTLGLLGSLYHALLQPVVAGGGPGAAADRLLHGQALHDPPHPTQRGRHTAGGLQAWPGPPPQPQPLAWPLCMGLGEMGRWE.

The N-terminal stretch at 1–29 (MGLPWGQPHLGLQMLLLALNCLRPSLSLG) is a signal peptide. Topologically, residues 30 to 240 (EWGSWMDASS…LHPLFSGRPP (211 aa)) are lumenal. Residue Asn133 is glycosylated (N-linked (GlcNAc...) asparagine). The chain crosses the membrane as a helical span at residues 241 to 266 (TLGLLGSLYHALLQPVVAGGGPGAAA). The Cytoplasmic portion of the chain corresponds to 267 to 320 (DRLLHGQALHDPPHPTQRGRHTAGGLQAWPGPPPQPQPLAWPLCMGLGEMGRWE). Positions 273–303 (QALHDPPHPTQRGRHTAGGLQAWPGPPPQPQ) are disordered.

This sequence belongs to the uroplakin-3 family. In terms of assembly, heterodimer with uroplakin-1B (UPK1B).

It is found in the cell membrane. Functionally, component of the asymmetric unit membrane (AUM); a highly specialized biomembrane elaborated by terminally differentiated urothelial cells. May play an important role in AUM-cytoskeleton interaction in terminally differentiated urothelial cells. It also contributes to the formation of urothelial glycocalyx which may play an important role in preventing bacterial adherence. In Homo sapiens (Human), this protein is Uroplakin-3b (UPK3B).